The chain runs to 141 residues: UPF0310 protein Mflv_0785 (141 aa).

This sequence belongs to the UPF0310 family.

The chain is UPF0310 protein Mflv_0785 from Mycolicibacterium gilvum (strain PYR-GCK) (Mycobacterium gilvum (strain PYR-GCK)).